Reading from the N-terminus, the 265-residue chain is UDP-N-acetylenolpyruvoylglucosamine reductase (265 aa).

The region spanning 15-169 (GVGGPAELWT…TRVRLKLKER (155 aa)) is the FAD-binding PCMH-type domain. The active site involves Arg-149. Residues 182–203 (DRARKGQPKRKSAGCAFKNPPG) are disordered. Cys-196 functions as the Proton donor in the catalytic mechanism.

It belongs to the MurB family. FAD is required as a cofactor.

Its subcellular location is the cytoplasm. The enzyme catalyses UDP-N-acetyl-alpha-D-muramate + NADP(+) = UDP-N-acetyl-3-O-(1-carboxyvinyl)-alpha-D-glucosamine + NADPH + H(+). It participates in cell wall biogenesis; peptidoglycan biosynthesis. Its function is as follows. Cell wall formation. The polypeptide is UDP-N-acetylenolpyruvoylglucosamine reductase (Thermus thermophilus (strain ATCC BAA-163 / DSM 7039 / HB27)).